We begin with the raw amino-acid sequence, 359 residues long: MKKVLALALIAPLLISCSGKKPDSNGEEYIKDTNGFDILMGQFAHNIENIWGINEVLIAGPKDYVKYSDRYLTRSHINFETGQITIETIATLNPAETLRQAIVTTLLMGDDPSSIDLYSDANDIKPSREPFLYGQVLDNTGQPIRWSGRANSFADYLLQNKLMKRTSGLHVIYSVTIQLVPNHLDKRAHKYLDMVRRASERYGVDESLILAIMQTESSFNPYAVSRSDALGLMQVMQHTAGKDVFVSKGKWGTPSRSYLFDPEKNIDTGTAYLAILQNTYLGGIQNTTSRRYAVITAYNGGAGSVLRIFSSDKGQAVNIINQMSPGDVYEALTQRHPSAESRRYLYKVNNTQKNYRRIR.

The signal sequence occupies residues 1–16 (MKKVLALALIAPLLIS). Residue C17 is the site of N-palmitoyl cysteine attachment. C17 carries the S-diacylglycerol cysteine lipid modification.

The protein belongs to the transglycosylase Slt family.

It is found in the cell outer membrane. It carries out the reaction Exolytic cleavage of the (1-&gt;4)-beta-glycosidic linkage between N-acetylmuramic acid (MurNAc) and N-acetylglucosamine (GlcNAc) residues in peptidoglycan, from either the reducing or the non-reducing ends of the peptidoglycan chains, with concomitant formation of a 1,6-anhydrobond in the MurNAc residue.. Functionally, murein-degrading enzyme. May play a role in recycling of muropeptides during cell elongation and/or cell division. The sequence is that of Membrane-bound lytic murein transglycosylase C from Edwardsiella ictaluri (strain 93-146).